Reading from the N-terminus, the 845-residue chain is Protein arginine N-methyltransferase 9 (845 aa).

3 TPR repeats span residues 25–58 (VSRSLQSAEHCLGVQDFGTAYAHYLLVLSLAPEL), 67–100 (QYTLFRWAEELDALSRIQDLLGCYEQALELFPDD), and 101–134 (EVICNSMGEHLFRMGFRDEAAGYFHKAVKLNPDF). 2 consecutive SAM-dependent MTase PRMT-type domains span residues 137–466 (AKEN…YLRI) and 530–845 (NIPY…TVKQ).

The protein belongs to the class I-like SAM-binding methyltransferase superfamily. Protein arginine N-methyltransferase family. As to quaternary structure, found in a complex with PRMT9, SF3B2 and SF3B4. Interacts with SF3B2.

The protein localises to the cytoplasm. It catalyses the reaction L-arginyl-[protein] + 2 S-adenosyl-L-methionine = N(omega),N(omega)'-dimethyl-L-arginyl-[protein] + 2 S-adenosyl-L-homocysteine + 2 H(+). Functionally, arginine methyltransferase that can both catalyze the formation of omega-N monomethylarginine (MMA) and symmetrical dimethylarginine (sDMA). Specifically mediates the symmetrical dimethylation of SF3B2. Involved in the regulation of alternative splicing of pre-mRNA. This chain is Protein arginine N-methyltransferase 9, found in Homo sapiens (Human).